We begin with the raw amino-acid sequence, 219 residues long: 3-dehydroquinate dehydratase (219 aa).

3-dehydroquinate-binding positions include 34-36 (ELR) and arginine 63. Residue histidine 114 is the Proton donor/acceptor of the active site. Residue lysine 139 is the Schiff-base intermediate with substrate of the active site. Positions 174, 193, and 197 each coordinate 3-dehydroquinate.

Belongs to the type-I 3-dehydroquinase family. As to quaternary structure, homodimer.

It catalyses the reaction 3-dehydroquinate = 3-dehydroshikimate + H2O. Its pathway is metabolic intermediate biosynthesis; chorismate biosynthesis; chorismate from D-erythrose 4-phosphate and phosphoenolpyruvate: step 3/7. Functionally, involved in the third step of the chorismate pathway, which leads to the biosynthesis of aromatic amino acids. Catalyzes the cis-dehydration of 3-dehydroquinate (DHQ) and introduces the first double bond of the aromatic ring to yield 3-dehydroshikimate. This is 3-dehydroquinate dehydratase from Sulfolobus acidocaldarius (strain ATCC 33909 / DSM 639 / JCM 8929 / NBRC 15157 / NCIMB 11770).